Here is a 317-residue protein sequence, read N- to C-terminus: tRNA N6-adenosine threonylcarbamoyltransferase (317 aa).

Residues H110 and H114 each contribute to the Fe cation site. Substrate is bound by residues V132–G136, D165, G178, D182, and N271. Residue D300 participates in Fe cation binding.

It belongs to the KAE1 / TsaD family. It depends on Fe(2+) as a cofactor.

The protein localises to the cytoplasm. The enzyme catalyses L-threonylcarbamoyladenylate + adenosine(37) in tRNA = N(6)-L-threonylcarbamoyladenosine(37) in tRNA + AMP + H(+). Required for the formation of a threonylcarbamoyl group on adenosine at position 37 (t(6)A37) in tRNAs that read codons beginning with adenine. Is involved in the transfer of the threonylcarbamoyl moiety of threonylcarbamoyl-AMP (TC-AMP) to the N6 group of A37, together with TsaE and TsaB. TsaD likely plays a direct catalytic role in this reaction. This is tRNA N6-adenosine threonylcarbamoyltransferase from Mesoplasma florum (strain ATCC 33453 / NBRC 100688 / NCTC 11704 / L1) (Acholeplasma florum).